The primary structure comprises 64 residues: Large ribosomal subunit protein bL35 (64 aa).

Over residues 1-14 (MKQKTHKGTAKRIK) the composition is skewed to basic residues. The interval 1-48 (MKQKTHKGTAKRIKVTGSGKLRREQANRRHLLEGKPSKRTRRLKGTED) is disordered. The segment covering 21–36 (LRREQANRRHLLEGKP) has biased composition (basic and acidic residues).

Belongs to the bacterial ribosomal protein bL35 family.

The chain is Large ribosomal subunit protein bL35 from Corynebacterium aurimucosum (strain ATCC 700975 / DSM 44827 / CIP 107346 / CN-1) (Corynebacterium nigricans).